Consider the following 169-residue polypeptide: ATP synthase subunit b (169 aa).

Residues 11–31 (KLPLGNMLFIIISFLVLMVIL) form a helical membrane-spanning segment.

It belongs to the ATPase B chain family. In terms of assembly, F-type ATPases have 2 components, F(1) - the catalytic core - and F(0) - the membrane proton channel. F(1) has five subunits: alpha(3), beta(3), gamma(1), delta(1), epsilon(1). F(0) has three main subunits: a(1), b(2) and c(10-14). The alpha and beta chains form an alternating ring which encloses part of the gamma chain. F(1) is attached to F(0) by a central stalk formed by the gamma and epsilon chains, while a peripheral stalk is formed by the delta and b chains.

It localises to the cell membrane. Functionally, f(1)F(0) ATP synthase produces ATP from ADP in the presence of a proton or sodium gradient. F-type ATPases consist of two structural domains, F(1) containing the extramembraneous catalytic core and F(0) containing the membrane proton channel, linked together by a central stalk and a peripheral stalk. During catalysis, ATP synthesis in the catalytic domain of F(1) is coupled via a rotary mechanism of the central stalk subunits to proton translocation. Its function is as follows. Component of the F(0) channel, it forms part of the peripheral stalk, linking F(1) to F(0). This chain is ATP synthase subunit b, found in Leuconostoc citreum (strain KM20).